The following is a 282-amino-acid chain: Large ribosomal subunit protein uL2 (282 aa).

Disordered stretches follow at residues Lys26–Gly55 and Pro218–Ser266. Residues Leu34–Arg43 show a composition bias toward polar residues. Over residues Thr254 to Ser266 the composition is skewed to basic residues.

The protein belongs to the universal ribosomal protein uL2 family. As to quaternary structure, part of the 50S ribosomal subunit. Forms a bridge to the 30S subunit in the 70S ribosome.

In terms of biological role, one of the primary rRNA binding proteins. Required for association of the 30S and 50S subunits to form the 70S ribosome, for tRNA binding and peptide bond formation. It has been suggested to have peptidyltransferase activity; this is somewhat controversial. Makes several contacts with the 16S rRNA in the 70S ribosome. The chain is Large ribosomal subunit protein uL2 from Pediococcus pentosaceus (strain ATCC 25745 / CCUG 21536 / LMG 10740 / 183-1w).